A 75-amino-acid polypeptide reads, in one-letter code: Putative sulfur carrier protein YrkI (75 aa).

The active-site Cysteine persulfide intermediate is the Cys-14.

The protein belongs to the sulfur carrier protein TusA family.

This Bacillus subtilis (strain 168) protein is Putative sulfur carrier protein YrkI (yrkI).